Consider the following 223-residue polypeptide: Probable transaldolase (223 aa).

Lysine 91 acts as the Schiff-base intermediate with substrate in catalysis.

Belongs to the transaldolase family. Type 3B subfamily.

It is found in the cytoplasm. The enzyme catalyses D-sedoheptulose 7-phosphate + D-glyceraldehyde 3-phosphate = D-erythrose 4-phosphate + beta-D-fructose 6-phosphate. It participates in carbohydrate degradation; pentose phosphate pathway; D-glyceraldehyde 3-phosphate and beta-D-fructose 6-phosphate from D-ribose 5-phosphate and D-xylulose 5-phosphate (non-oxidative stage): step 2/3. In terms of biological role, transaldolase is important for the balance of metabolites in the pentose-phosphate pathway. In Prosthecochloris aestuarii (strain DSM 271 / SK 413), this protein is Probable transaldolase.